Here is a 113-residue protein sequence, read N- to C-terminus: MQAKAVARTVRIAPRKARLVIDLIRGKKVGEAFAILRHTPKAASPIIEKVLKSAVANAEHNYDMDINNLVVSQAYVNEGPTLKRFRPRARGQASAINKRTSHITIVVSEKKEG.

This sequence belongs to the universal ribosomal protein uL22 family. Part of the 50S ribosomal subunit.

Functionally, this protein binds specifically to 23S rRNA; its binding is stimulated by other ribosomal proteins, e.g. L4, L17, and L20. It is important during the early stages of 50S assembly. It makes multiple contacts with different domains of the 23S rRNA in the assembled 50S subunit and ribosome. The globular domain of the protein is located near the polypeptide exit tunnel on the outside of the subunit, while an extended beta-hairpin is found that lines the wall of the exit tunnel in the center of the 70S ribosome. The protein is Large ribosomal subunit protein uL22 of Geobacillus thermodenitrificans (strain NG80-2).